The primary structure comprises 218 residues: MSVTIPQKDNQSLNKAGMGNTVRIAGVDEAGRGPLSGPVVAAAVILDPTRPITGLGDSKALSERRRRELFRLIRANAWVGIGIAEPAEIDRLNILHATMAAMRRAVARLPVRPTLVLVDGNRLPPGLPCPAEAIIKGDAKEACIGAASIIAKTVRDDLMEQAARRFPGYGFEGHKGYPSAAHKAALETSGACPIHRRSYAPVRAALESRFSTNANRCG.

An RNase H type-2 domain is found at 22-211 (VRIAGVDEAG…VRAALESRFS (190 aa)). Asp-28, Glu-29, and Asp-119 together coordinate a divalent metal cation.

It belongs to the RNase HII family. Mn(2+) serves as cofactor. The cofactor is Mg(2+).

It is found in the cytoplasm. It carries out the reaction Endonucleolytic cleavage to 5'-phosphomonoester.. Its function is as follows. Endonuclease that specifically degrades the RNA of RNA-DNA hybrids. This chain is Ribonuclease HII, found in Maricaulis maris (strain MCS10) (Caulobacter maris).